We begin with the raw amino-acid sequence, 97 residues long: Aspartyl/glutamyl-tRNA(Asn/Gln) amidotransferase subunit C (97 aa).

It belongs to the GatC family. Heterotrimer of A, B and C subunits.

The catalysed reaction is L-glutamyl-tRNA(Gln) + L-glutamine + ATP + H2O = L-glutaminyl-tRNA(Gln) + L-glutamate + ADP + phosphate + H(+). It carries out the reaction L-aspartyl-tRNA(Asn) + L-glutamine + ATP + H2O = L-asparaginyl-tRNA(Asn) + L-glutamate + ADP + phosphate + 2 H(+). Its function is as follows. Allows the formation of correctly charged Asn-tRNA(Asn) or Gln-tRNA(Gln) through the transamidation of misacylated Asp-tRNA(Asn) or Glu-tRNA(Gln) in organisms which lack either or both of asparaginyl-tRNA or glutaminyl-tRNA synthetases. The reaction takes place in the presence of glutamine and ATP through an activated phospho-Asp-tRNA(Asn) or phospho-Glu-tRNA(Gln). This Synechococcus sp. (strain CC9605) protein is Aspartyl/glutamyl-tRNA(Asn/Gln) amidotransferase subunit C.